The primary structure comprises 376 residues: Beta-centractin (376 aa).

N-acetylmethionine is present on M1. Y4 is modified (3'-nitrotyrosine).

This sequence belongs to the actin family. ARP1 subfamily.

The protein localises to the cytoplasm. The protein resides in the cytoskeleton. Its subcellular location is the microtubule organizing center. It is found in the centrosome. Functionally, component of a multi-subunit complex involved in microtubule based vesicle motility. It is associated with the centrosome. This is Beta-centractin (ACTR1B) from Homo sapiens (Human).